Reading from the N-terminus, the 99-residue chain is RNA-binding protein Hfq (99 aa).

Residues D10–I71 enclose the Sm domain. Positions V77–K99 are disordered.

The protein belongs to the Hfq family. In terms of assembly, homohexamer.

Functionally, RNA chaperone that binds small regulatory RNA (sRNAs) and mRNAs to facilitate mRNA translational regulation in response to envelope stress, environmental stress and changes in metabolite concentrations. Also binds with high specificity to tRNAs. This Caldicellulosiruptor saccharolyticus (strain ATCC 43494 / DSM 8903 / Tp8T 6331) protein is RNA-binding protein Hfq.